The sequence spans 196 residues: ATP-dependent Clp protease proteolytic subunit (196 aa).

The Nucleophile role is filled by S96. The active site involves H121.

Belongs to the peptidase S14 family. Fourteen ClpP subunits assemble into 2 heptameric rings which stack back to back to give a disk-like structure with a central cavity, resembling the structure of eukaryotic proteasomes.

The protein resides in the cytoplasm. It carries out the reaction Hydrolysis of proteins to small peptides in the presence of ATP and magnesium. alpha-casein is the usual test substrate. In the absence of ATP, only oligopeptides shorter than five residues are hydrolyzed (such as succinyl-Leu-Tyr-|-NHMec, and Leu-Tyr-Leu-|-Tyr-Trp, in which cleavage of the -Tyr-|-Leu- and -Tyr-|-Trp bonds also occurs).. Cleaves peptides in various proteins in a process that requires ATP hydrolysis. Has a chymotrypsin-like activity. Plays a major role in the degradation of misfolded proteins. The chain is ATP-dependent Clp protease proteolytic subunit from Streptococcus gordonii (strain Challis / ATCC 35105 / BCRC 15272 / CH1 / DL1 / V288).